A 286-amino-acid chain; its full sequence is Protease HtpX (286 aa).

The next 2 membrane-spanning stretches (helical) occupy residues 4 to 24 (ILLF…ILSL) and 33 to 53 (TGLL…SLFL). His139 provides a ligand contact to Zn(2+). Glu140 is an active-site residue. His143 contacts Zn(2+). Helical transmembrane passes span 147 to 167 (GDMV…IFVS) and 186 to 206 (IYFL…SMIA). Residue Glu214 participates in Zn(2+) binding.

The protein belongs to the peptidase M48B family. It depends on Zn(2+) as a cofactor.

It localises to the cell inner membrane. The protein is Protease HtpX of Pasteurella multocida (strain Pm70).